The sequence spans 372 residues: Long-tail fiber protein gp35 (372 aa).

The GG-type lectin domain maps to 22–193; it reads NSVRYKISIA…VGATGFPRGT (172 aa).

In terms of assembly, the long-tail fibers are trimeric, with a stoichiometry of gp34/gp37/gp36/gp35 of 3:3:3:1.

It is found in the virion. Structural component of the distal-half of the long-tail fiber. The long-tail fiber of T4 is about 1600 Angstroms long with a kink in the middle that divides the fiber into proximal and distal halves. The latter hinge is probably composed of gp35 protein. The polypeptide is Long-tail fiber protein gp35 (35) (Enterobacteria phage T4 (Bacteriophage T4)).